Consider the following 394-residue polypeptide: Envelope glycoprotein D (394 aa).

The N-terminal stretch at 1 to 25 (MGGAAARLGAVILFVVIVGLHGVRS) is a signal peptide. The interval 26-57 (KYALVDASLKMADPNRFRGKDLPVLDQLTDPP) is interaction with TNFRSF14. Topologically, residues 26 to 340 (KYALVDASLK…YHPPATPNNM (315 aa)) are virion surface. H64 lines the Zn(2+) pocket. 3 disulfides stabilise this stretch: C91–C214, C131–C227, and C143–C152. N119 and N146 each carry an N-linked (GlcNAc...) asparagine; by host glycan. D240 contacts Zn(2+). The segment at 261-305 (LKIAGWHGPKAPYTSTLLPPELSETPNATQPELAPEDPEDSALLE) is profusion. The segment at 275–301 (STLLPPELSETPNATQPELAPEDPEDS) is disordered. N-linked (GlcNAc...) asparagine; by host glycosylation is present at N287. A helical membrane pass occupies residues 341-361 (GLIAGAVGGSLLAALVICGIV). Residues 362-394 (YWMRRHTQKAPKRIRLPHIREDDQPSSHQPLFY) lie on the Intravirion side of the membrane. A disordered region spans residues 375–394 (IRLPHIREDDQPSSHQPLFY).

Belongs to the herpesviridae glycoprotein D family. In terms of assembly, homodimer. Interacts with host receptor TNFRSF14. Interacts with host receptor NECTIN1. Interacts (via profusion domain) with gB; this interaction occurs in the absence of gH/gL. Interacts (via profusion domain) with gH/gL heterodimer; this interaction occurs in the absence of gB. Associates with the gB-gH/gL-gD complex. Interacts (via C-terminus) with UL11 tegument protein. Interacts (via C-terminus) with VP22 tegument protein; this interaction has been demonstrated in other strains, but might be very weak since PubMed:19279114 has failed to see it. Interacts with host RSAD2.

Its subcellular location is the virion membrane. The protein resides in the host Golgi apparatus. Envelope glycoprotein that binds to the host cell entry receptors NECTIN1, TNFRSF14/HVEM and 3-O-sulfated heparan sulfate, promoting the virus entry into host cells. May trigger fusion with host membrane, by recruiting the fusion machinery composed of gB and gH/gL. In Homo sapiens (Human), this protein is Envelope glycoprotein D (gD).